Here is a 377-residue protein sequence, read N- to C-terminus: Ribosomal RNA large subunit methyltransferase G (377 aa).

It belongs to the methyltransferase superfamily. RlmG family.

The protein localises to the cytoplasm. The enzyme catalyses guanosine(1835) in 23S rRNA + S-adenosyl-L-methionine = N(2)-methylguanosine(1835) in 23S rRNA + S-adenosyl-L-homocysteine + H(+). Functionally, specifically methylates the guanine in position 1835 (m2G1835) of 23S rRNA. This chain is Ribosomal RNA large subunit methyltransferase G, found in Shewanella sp. (strain ANA-3).